A 131-amino-acid polypeptide reads, in one-letter code: Methylated-DNA--protein-cysteine methyltransferase (131 aa).

Cysteine 98 functions as the Nucleophile; methyl group acceptor in the catalytic mechanism.

Belongs to the MGMT family.

It is found in the cytoplasm. It catalyses the reaction a 6-O-methyl-2'-deoxyguanosine in DNA + L-cysteinyl-[protein] = S-methyl-L-cysteinyl-[protein] + a 2'-deoxyguanosine in DNA. The catalysed reaction is a 4-O-methyl-thymidine in DNA + L-cysteinyl-[protein] = a thymidine in DNA + S-methyl-L-cysteinyl-[protein]. Functionally, involved in the cellular defense against the biological effects of O6-methylguanine (O6-MeG) and O4-methylthymine (O4-MeT) in DNA. Repairs the methylated nucleobase in DNA by stoichiometrically transferring the methyl group to a cysteine residue in the enzyme. This is a suicide reaction: the enzyme is irreversibly inactivated. This is Methylated-DNA--protein-cysteine methyltransferase (ogt) from Methanopyrus kandleri (strain AV19 / DSM 6324 / JCM 9639 / NBRC 100938).